We begin with the raw amino-acid sequence, 62 residues long: Large ribosomal subunit protein uL29 (62 aa).

This sequence belongs to the universal ribosomal protein uL29 family.

This is Large ribosomal subunit protein uL29 from Vesicomyosocius okutanii subsp. Calyptogena okutanii (strain HA).